Here is a 228-residue protein sequence, read N- to C-terminus: Eukaryotic translation initiation factor 4E-2 (228 aa).

A disulfide bond links Cys-130 and Cys-134.

The protein belongs to the eukaryotic initiation factor 4E family. As to quaternary structure, eIF4F is a multi-subunit complex, the composition of which varies with external and internal environmental conditions. It is composed of at least eIF4A, eIF4E and eIF4G. eIF4E is also known to interact with other partners. In terms of tissue distribution, highly expressed in all somatic tissues.

Functionally, recognizes and binds the 7-methylguanosine-containing mRNA cap during an early step in the initiation of protein synthesis and facilitates ribosome binding by inducing the unwinding of the mRNAs secondary structures. All 5 eIF4E proteins bind monomethyl cap structures. Only ife-1, ife-2 and ife-5 bind trimethyl cap structures which result from trans-splicing. Translation of trimethyl cap structure mRNAs may be regulated by intracellular redox state; disulfide bonds change the width and depth of the cap-binding cavity determining selectivity to mRNA caps. Probably by regulating mRNA translation in somatic cells, negatively regulates lifespan independently of daf-2/insulin and let-363/TOR pathways. Negatively regulates resistance to oxidative stress. May play a role in embryonic development. This Caenorhabditis elegans protein is Eukaryotic translation initiation factor 4E-2 (ife-2).